The sequence spans 430 residues: Glutamate-1-semialdehyde 2,1-aminomutase (430 aa).

N6-(pyridoxal phosphate)lysine is present on K267.

It belongs to the class-III pyridoxal-phosphate-dependent aminotransferase family. HemL subfamily. Homodimer. It depends on pyridoxal 5'-phosphate as a cofactor.

It localises to the cytoplasm. It carries out the reaction (S)-4-amino-5-oxopentanoate = 5-aminolevulinate. It functions in the pathway porphyrin-containing compound metabolism; protoporphyrin-IX biosynthesis; 5-aminolevulinate from L-glutamyl-tRNA(Glu): step 2/2. The sequence is that of Glutamate-1-semialdehyde 2,1-aminomutase from Desulfotalea psychrophila (strain LSv54 / DSM 12343).